The sequence spans 705 residues: MSGFLIANALLFLIVTAYAVYLFVYLVKTRLAYIKLGQKEQFDQRFKERLHAIWVNVFGQKKLLKDKKSGIIHVMFFYGFILVQFGAIDFIIKGLAPGRNLSLGPVYPAFTFFQEIVTFLILIAVGWAFYRRYIEKLVRLKRGFKAGLVLIFIGGLMLTVLLGNGMNLIWHEHGLSWSEPIASGIAFMLSGVGKTGAAVIFYIAWWIHLLFLLSFLVYVPQSKHAHLIAGPANVFFNRMESAGKLEKIDFTDETKESYGAGKIEDFRQSQLLDLYACVECGRCTNMCPATGTGKMLSPMDLILRLRDHLTEKGAAVTSRSPWVPAAAFRHTRGNQLAAASAGSGSQEAAAALDYNPSLIGDVITEEEIWACTTCRNCEDQCPVMNEHVDKIIDLRRYLVLTEGKMDSDAQRAMTSIERQGNPWGLNRKERENWRDEAPDAEIPTVKEMKKEGKEFEYLFWVGSMGSYDNRSQKIAISFAKLLNHAGVSFAILGNKEKNSGDTPRRLGNEFLFQELAEKNISEFEKNDVKKIVTIDPHAYNLFKNEYPDFGFEGEVYHHTEVLAELVKNGKLRPQHPLHETITFHDSCYLGRYNEVYDPPREILKAIPGVQLVEMERSRETGMCCGAGGGLMWMEEETGNRINVARTEQALAVNPSVISSGCPYCLTMLGDGTKAKEAEDQVKTYDVVELLAQSVLGADLKMGEKQ.

The next 6 membrane-spanning stretches (helical) occupy residues 4 to 24 (FLIANALLFLIVTAYAVYLFV), 71 to 91 (IIHVMFFYGFILVQFGAIDFI), 109 to 129 (AFTFFQEIVTFLILIAVGWAF), 146 to 166 (AGLVLIFIGGLMLTVLLGNGM), 173 to 193 (HGLSWSEPIASGIAFMLSGVG), and 199 to 219 (VIFYIAWWIHLLFLLSFLVYV). 4Fe-4S ferredoxin-type domains are found at residues 268–298 (QSQLLDLYACVECGRCTNMCPATGTGKMLSP) and 360–391 (GDVITEEEIWACTTCRNCEDQCPVMNEHVDKI). [4Fe-4S] cluster contacts are provided by cysteine 277, cysteine 280, cysteine 283, cysteine 287, cysteine 371, cysteine 374, cysteine 377, and cysteine 381.

Requires [4Fe-4S] cluster as cofactor.

Its subcellular location is the cell membrane. The polypeptide is Probable iron-sulfur-binding oxidoreductase FadF (fadF) (Bacillus subtilis (strain 168)).